The chain runs to 299 residues: Homeobox protein ceh-24 (299 aa).

Basic and acidic residues predominate over residues Met-1 to Lys-35. 2 disordered regions span residues Met-1–Lys-45 and Gln-208–Phe-263. The segment at residues Arg-150 to Glu-209 is a DNA-binding region (homeobox). The segment covering Asp-242–Ser-252 has biased composition (acidic residues).

It belongs to the NK-2 homeobox family. As to expression, expressed in the 8 vulval muscles, 8-10 ventral neurons in the head and in the most posterior pharyngeal muscle cell, m8. Expressed in SIA, SIB and SMB sublateral motor neurons, and in muscles of the pharynx and vulva.

It localises to the nucleus. Probable transcriptional regulator that is required in neural development for the normal formation of sublateral cholinergic motor neuron processes. Plays a role in regulating the expression of acetylcholine transporter protein unc-17 in the sublateral processes. In particular, it is required in sublateral motor neurons for a left-right turning behavior that occurs during the lethargus phase of the normal sleep process called 'flipping'. During 'flipping' animals rotate 180 degrees about their longitudinal axis. The sequence is that of Homeobox protein ceh-24 from Caenorhabditis elegans.